The sequence spans 202 residues: LexA repressor (202 aa).

A DNA-binding region (H-T-H motif) is located at residues 28–48; sequence RAEIAQRLGFRSPNAAEEHLK. Active-site for autocatalytic cleavage activity residues include Ser119 and Lys156.

This sequence belongs to the peptidase S24 family. In terms of assembly, homodimer.

It carries out the reaction Hydrolysis of Ala-|-Gly bond in repressor LexA.. Represses a number of genes involved in the response to DNA damage (SOS response), including recA and lexA. Binds to the 16 bp palindromic sequence 5'-CTGTATATATATACAG-3'. In the presence of single-stranded DNA, RecA interacts with LexA causing an autocatalytic cleavage which disrupts the DNA-binding part of LexA, leading to derepression of the SOS regulon and eventually DNA repair. This chain is LexA repressor, found in Edwardsiella ictaluri (strain 93-146).